The primary structure comprises 372 residues: Germination protease (372 aa).

The propeptide occupies 1–15; the sequence is MNRSIDLSMYSVRTD.

This sequence belongs to the peptidase A25 family. Homotetramer. Post-translationally, autoproteolytically processed. The inactive tetrameric zymogen termed p46 autoprocesses to a smaller form termed p41, which is active only during spore germination.

The enzyme catalyses Endopeptidase action with P4 Glu or Asp, P1 preferably Glu &gt; Asp, P1' hydrophobic and P2' Ala.. Its function is as follows. Initiates the rapid degradation of small, acid-soluble proteins during spore germination. In Geobacillus sp. (strain WCH70), this protein is Germination protease.